We begin with the raw amino-acid sequence, 132 residues long: Small ribosomal subunit protein uS8 (132 aa).

It belongs to the universal ribosomal protein uS8 family. In terms of assembly, part of the 30S ribosomal subunit. Contacts proteins S5 and S12.

One of the primary rRNA binding proteins, it binds directly to 16S rRNA central domain where it helps coordinate assembly of the platform of the 30S subunit. This is Small ribosomal subunit protein uS8 from Rhizobium rhizogenes (strain K84 / ATCC BAA-868) (Agrobacterium radiobacter).